We begin with the raw amino-acid sequence, 141 residues long: Putative pre-16S rRNA nuclease (141 aa).

Belongs to the YqgF nuclease family.

The protein localises to the cytoplasm. Could be a nuclease involved in processing of the 5'-end of pre-16S rRNA. This is Putative pre-16S rRNA nuclease from Chlorobium luteolum (strain DSM 273 / BCRC 81028 / 2530) (Pelodictyon luteolum).